A 259-amino-acid chain; its full sequence is UPF0246 protein MADE_1015435 (259 aa).

Belongs to the UPF0246 family.

In Alteromonas mediterranea (strain DSM 17117 / CIP 110805 / LMG 28347 / Deep ecotype), this protein is UPF0246 protein MADE_1015435.